The chain runs to 194 residues: Inosine triphosphate pyrophosphatase (194 aa).

8 to 13 (TGNANK) lines the ITP pocket. Position 47 (glutamate 47) interacts with Mg(2+). ITP is bound by residues lysine 59, 75-76 (DT), lysine 92, 151-154 (FGWD), lysine 174, and 179-180 (HR).

The protein belongs to the HAM1 NTPase family. As to quaternary structure, homodimer. Requires Mg(2+) as cofactor. Mn(2+) is required as a cofactor.

It is found in the cytoplasm. The protein localises to the nucleus. It carries out the reaction ITP + H2O = IMP + diphosphate + H(+). The catalysed reaction is dITP + H2O = dIMP + diphosphate + H(+). The enzyme catalyses XTP + H2O = XMP + diphosphate + H(+). In terms of biological role, pyrophosphatase that hydrolyzes non-canonical purine nucleotides such as inosine triphosphate (ITP), deoxyinosine triphosphate (dITP) or xanthosine 5'-triphosphate (XTP) to their respective monophosphate derivatives. The enzyme does not distinguish between the deoxy- and ribose forms. Probably excludes non-canonical purines from RNA and DNA precursor pools, thus preventing their incorporation into RNA and DNA and avoiding chromosomal lesions. The chain is Inosine triphosphate pyrophosphatase from Scheffersomyces stipitis (strain ATCC 58785 / CBS 6054 / NBRC 10063 / NRRL Y-11545) (Yeast).